The chain runs to 500 residues: Cytochrome P450 71B37 (500 aa).

A helical membrane pass occupies residues alanine 2–leucine 22. Cysteine 440 is a heme binding site.

The protein belongs to the cytochrome P450 family. It depends on heme as a cofactor.

The protein resides in the membrane. This is Cytochrome P450 71B37 (CYP71B37) from Arabidopsis thaliana (Mouse-ear cress).